The following is a 153-amino-acid chain: Large ribosomal subunit protein uL13 (153 aa).

It belongs to the universal ribosomal protein uL13 family. Part of the 50S ribosomal subunit.

Its function is as follows. This protein is one of the early assembly proteins of the 50S ribosomal subunit, although it is not seen to bind rRNA by itself. It is important during the early stages of 50S assembly. The protein is Large ribosomal subunit protein uL13 of Chelativorans sp. (strain BNC1).